Here is a 417-residue protein sequence, read N- to C-terminus: Type IV inositol polyphosphate 5-phosphatase 9 (417 aa).

Catalytic regions lie at residues 258–273 (DRVIFLGDLNYRISLP) and 339–354 (KKRAPAWCDRIIWYGN).

The protein belongs to the inositol polyphosphate 5-phosphatase family. As to expression, specifically expressed in roots.

It carries out the reaction a 1,2-diacyl-sn-glycero-3-phospho-(1D-myo-inositol-4,5-bisphosphate) + H2O = a 1,2-diacyl-sn-glycero-3-phospho-(1D-myo-inositol 4-phosphate) + phosphate. The enzyme catalyses a 1,2-diacyl-sn-glycero-3-phospho-(1D-myo-inositol-3,4,5-trisphosphate) + H2O = a 1,2-diacyl-sn-glycero-3-phospho-(1D-myo-inositol-3,4-bisphosphate) + phosphate. In terms of biological role, has phosphatase activity toward PtdIns(4,5)P2 and at a lower extent toward PtdIns(3,4,5)P3 but not toward Ins(1,4,5)P3. Functions in salt stress response by regulating reactive oxygen species (ROS) production, endocytosis, Ca(2+) influx and stress-responsive genes expression. The polypeptide is Type IV inositol polyphosphate 5-phosphatase 9 (Arabidopsis thaliana (Mouse-ear cress)).